Reading from the N-terminus, the 461-residue chain is Homogentisate 1,2-dioxygenase (461 aa).

Fe cation contacts are provided by His341, Glu347, and His377.

This sequence belongs to the homogentisate dioxygenase family. Fe cation is required as a cofactor.

It carries out the reaction homogentisate + O2 = 4-maleylacetoacetate + H(+). Its pathway is amino-acid degradation; L-phenylalanine degradation; acetoacetate and fumarate from L-phenylalanine: step 4/6. The sequence is that of Homogentisate 1,2-dioxygenase (HGO) from Arabidopsis thaliana (Mouse-ear cress).